The sequence spans 370 residues: Cytochrome b (370 aa).

4 consecutive transmembrane segments (helical) span residues 25–45, 69–90, 105–125, and 170–190; these read FGSMLLTCSALQVLTGFFLAV, WMMQNLHAMGASMFFICIYIHI, WLSGTTLLIMLMATAFFGYVL, and FFALHFILPFGIISFSSLHVM. The heme b site is built by H75 and H89. Positions 174 and 188 each coordinate heme b. H193 lines the a ubiquinone pocket. 4 helical membrane-spanning segments follow: residues 218–238, 280–300, 312–332, and 339–358; these read YKDLFMLSVMITLLLTMISFY, LGGALALAMSIMILLTMPFTH, FMQLMFWTFAATFLVITWTAT, and FTMISQVAALIYFLFFISNP.

This sequence belongs to the cytochrome b family. The cytochrome bc1 complex contains 3 respiratory subunits (MT-CYB, CYC1 and UQCRFS1), 2 core proteins (UQCRC1 and UQCRC2) and probably 6 low-molecular weight proteins. Requires heme b as cofactor.

It is found in the mitochondrion inner membrane. In terms of biological role, component of the ubiquinol-cytochrome c reductase complex (complex III or cytochrome b-c1 complex) that is part of the mitochondrial respiratory chain. The b-c1 complex mediates electron transfer from ubiquinol to cytochrome c. Contributes to the generation of a proton gradient across the mitochondrial membrane that is then used for ATP synthesis. This is Cytochrome b (MT-CYB) from Corallus hortulanus enydris (Garden tree boa).